Consider the following 84-residue polypeptide: Esculentin-1ISb (84 aa).

An N-terminal signal peptide occupies residues 1 to 22 (MFTLKKPLLLIVLLGIISLSLC). Residues 23–36 (EQERAADEDEGTKI) constitute a propeptide, removed in mature form. An intrachain disulfide couples Cys-78 to Cys-84.

In terms of tissue distribution, expressed by the skin glands.

The protein localises to the secreted. Has antimicrobial activity against Gram-negative bacterium E.coli ATCC 8739 (MIC=3.1 ug), against Gram positive bacteria S.aureus ATCC 6538 (MIC=3.1 ug), methicillin-resistant S.aureus ATCC 43300 (MIC=12.5 ug), B.subtilis ATCC 6633 (MIC=12.5 ug) and against fungus C.albicans ATCC 90028 (MIC=50 ug). The sequence is that of Esculentin-1ISb from Odorrana ishikawae (Ishikawa's frog).